The chain runs to 184 residues: Large ribosomal subunit protein uL6 (184 aa).

This sequence belongs to the universal ribosomal protein uL6 family. As to quaternary structure, part of the 50S ribosomal subunit.

In terms of biological role, this protein binds to the 23S rRNA, and is important in its secondary structure. It is located near the subunit interface in the base of the L7/L12 stalk, and near the tRNA binding site of the peptidyltransferase center. This is Large ribosomal subunit protein uL6 from Amoebophilus asiaticus (strain 5a2).